The chain runs to 127 residues: Mini-ribonuclease 3-like protein (127 aa).

Aspartate 19 is a catalytic residue.

The protein belongs to the MrnC RNase family.

Functionally, might be a ribonuclease involved in RNA processing. The sequence is that of Mini-ribonuclease 3-like protein (mrnCL) from Ilyobacter polytropus (strain ATCC 51220 / DSM 2926 / LMG 16218 / CuHBu1).